The sequence spans 110 residues: Large ribosomal subunit protein uL22 (110 aa).

It belongs to the universal ribosomal protein uL22 family. In terms of assembly, part of the 50S ribosomal subunit.

Its function is as follows. This protein binds specifically to 23S rRNA; its binding is stimulated by other ribosomal proteins, e.g. L4, L17, and L20. It is important during the early stages of 50S assembly. It makes multiple contacts with different domains of the 23S rRNA in the assembled 50S subunit and ribosome. The globular domain of the protein is located near the polypeptide exit tunnel on the outside of the subunit, while an extended beta-hairpin is found that lines the wall of the exit tunnel in the center of the 70S ribosome. This is Large ribosomal subunit protein uL22 from Buchnera aphidicola subsp. Acyrthosiphon pisum (strain 5A).